Consider the following 483-residue polypeptide: Proline--tRNA ligase (483 aa).

It belongs to the class-II aminoacyl-tRNA synthetase family. ProS type 3 subfamily. Homodimer.

The protein resides in the cytoplasm. It catalyses the reaction tRNA(Pro) + L-proline + ATP = L-prolyl-tRNA(Pro) + AMP + diphosphate. Catalyzes the attachment of proline to tRNA(Pro) in a two-step reaction: proline is first activated by ATP to form Pro-AMP and then transferred to the acceptor end of tRNA(Pro). This is Proline--tRNA ligase from Mycoplasma pneumoniae (strain ATCC 29342 / M129 / Subtype 1) (Mycoplasmoides pneumoniae).